The sequence spans 389 residues: Galactokinase (389 aa).

34–37 (EHTD) contacts substrate. ATP contacts are provided by residues Ser-68 and 125-131 (GSGLSSS). Positions 131 and 163 each coordinate Mg(2+). Residue Asp-175 is the Proton acceptor of the active site. Tyr-225 is a binding site for substrate.

The protein belongs to the GHMP kinase family. GalK subfamily.

The protein localises to the cytoplasm. It carries out the reaction alpha-D-galactose + ATP = alpha-D-galactose 1-phosphate + ADP + H(+). It functions in the pathway carbohydrate metabolism; galactose metabolism. Functionally, catalyzes the transfer of the gamma-phosphate of ATP to D-galactose to form alpha-D-galactose-1-phosphate (Gal-1-P). The protein is Galactokinase of Clostridium beijerinckii (strain ATCC 51743 / NCIMB 8052) (Clostridium acetobutylicum).